The sequence spans 130 residues: Small ribosomal subunit protein uS9 (130 aa).

It belongs to the universal ribosomal protein uS9 family.

This Streptococcus equi subsp. equi (strain 4047) protein is Small ribosomal subunit protein uS9.